The primary structure comprises 252 residues: Trans-aconitate 2-methyltransferase (252 aa).

The protein belongs to the methyltransferase superfamily. Tam family.

It is found in the cytoplasm. It catalyses the reaction trans-aconitate + S-adenosyl-L-methionine = (E)-3-(methoxycarbonyl)pent-2-enedioate + S-adenosyl-L-homocysteine. Functionally, catalyzes the S-adenosylmethionine monomethyl esterification of trans-aconitate. In Shigella flexneri, this protein is Trans-aconitate 2-methyltransferase.